A 547-amino-acid polypeptide reads, in one-letter code: Chaperonin GroEL (547 aa).

ATP contacts are provided by residues 30-33 (TLGP), Lys-51, 87-91 (DGTTT), Gly-415, and Asp-495.

It belongs to the chaperonin (HSP60) family. Forms a cylinder of 14 subunits composed of two heptameric rings stacked back-to-back. Interacts with the co-chaperonin GroES.

It is found in the cytoplasm. The catalysed reaction is ATP + H2O + a folded polypeptide = ADP + phosphate + an unfolded polypeptide.. Together with its co-chaperonin GroES, plays an essential role in assisting protein folding. The GroEL-GroES system forms a nano-cage that allows encapsulation of the non-native substrate proteins and provides a physical environment optimized to promote and accelerate protein folding. The sequence is that of Chaperonin GroEL from Aggregatibacter actinomycetemcomitans (Actinobacillus actinomycetemcomitans).